We begin with the raw amino-acid sequence, 203 residues long: Urease accessory protein UreG (203 aa).

A GTP-binding site is contributed by 11–18 (GPVGSGKT).

It belongs to the SIMIBI class G3E GTPase family. UreG subfamily. As to quaternary structure, homodimer. UreD, UreF and UreG form a complex that acts as a GTP-hydrolysis-dependent molecular chaperone, activating the urease apoprotein by helping to assemble the nickel containing metallocenter of UreC. The UreE protein probably delivers the nickel.

Its subcellular location is the cytoplasm. Facilitates the functional incorporation of the urease nickel metallocenter. This process requires GTP hydrolysis, probably effectuated by UreG. The polypeptide is Urease accessory protein UreG (Prochlorococcus marinus (strain MIT 9312)).